We begin with the raw amino-acid sequence, 351 residues long: Inhibin beta C chain (351 aa).

The signal sequence occupies residues 1–18; sequence MASSLLLALLFLTLATVV. The propeptide occupies 19–236; sequence NLKTDGPCPA…EGKHRVRRRG (218 aa). Asparagine 110, asparagine 142, and asparagine 160 each carry an N-linked (GlcNAc...) asparagine glycan. Intrachain disulfides connect cysteine 239–cysteine 247, cysteine 246–cysteine 316, cysteine 275–cysteine 348, and cysteine 279–cysteine 350.

Belongs to the TGF-beta family. As to quaternary structure, homodimeric or heterodimeric through association with alpha and beta subunits, linked by one or more disulfide bonds. Inhibins are heterodimers of one alpha and one beta subunit. Activins are homo- or heterodimers of beta subunits only.

The protein localises to the secreted. Inhibins and activins inhibit and activate, respectively, the secretion of follitropin by the pituitary gland. Inhibins/activins are involved in regulating a number of diverse functions such as hypothalamic and pituitary hormone secretion, gonadal hormone secretion, germ cell development and maturation, erythroid differentiation, insulin secretion, nerve cell survival, embryonic axial development or bone growth, depending on their subunit composition. Inhibins appear to oppose the functions of activins. This chain is Inhibin beta C chain (Inhbc), found in Rattus norvegicus (Rat).